Here is a 116-residue protein sequence, read N- to C-terminus: Ribulose bisphosphate carboxylase small subunit 1 (116 aa).

This sequence belongs to the RuBisCO small chain family. Heterohexadecamer of 8 large and 8 small subunits.

The protein resides in the cytoplasm. Its function is as follows. RuBisCO catalyzes two reactions: the carboxylation of D-ribulose 1,5-bisphosphate, the primary event in carbon dioxide fixation, as well as the oxidative fragmentation of the pentose substrate. Both reactions occur simultaneously and in competition at the same active site. Although the small subunit is not catalytic it is essential for maximal activity. Functionally, can replace the endogenous type I ccbS gene in H.neapolitanus, reconstituting RuBisCO with about 10% of normal activity; the active enzyme is targeted to carboxysomes. The polypeptide is Ribulose bisphosphate carboxylase small subunit 1 (Hydrogenovibrio crunogenus (strain DSM 25203 / XCL-2) (Thiomicrospira crunogena)).